Consider the following 145-residue polypeptide: Basic phospholipase A2 PC16 (145 aa).

An N-terminal signal peptide occupies residues 1-21 (MYPAHLLLLLAVCVSLLGASA). A propeptide spanning residues 22–27 (IPPLPL) is cleaved from the precursor. 7 disulfide bridges follow: C38–C98, C54–C144, C56–C72, C71–C125, C78–C118, C87–C111, and C105–C116. Y55, G57, and G59 together coordinate Ca(2+). Residue H75 is part of the active site. Ca(2+) is bound at residue D76. Residue D119 is part of the active site.

It belongs to the phospholipase A2 family. Group I subfamily. D49 sub-subfamily. Ca(2+) serves as cofactor.

Its subcellular location is the secreted. It carries out the reaction a 1,2-diacyl-sn-glycero-3-phosphocholine + H2O = a 1-acyl-sn-glycero-3-phosphocholine + a fatty acid + H(+). PLA2 catalyzes the calcium-dependent hydrolysis of the 2-acyl groups in 3-sn-phosphoglycerides. This Laticauda laticaudata (Blue-ringed sea krait) protein is Basic phospholipase A2 PC16.